The chain runs to 261 residues: Putative outer membrane protein TC_0650 (261 aa).

A signal peptide spans 1-17 (MRFLFAFILLCSPWVSE).

It is found in the cell outer membrane. This is Putative outer membrane protein TC_0650 from Chlamydia muridarum (strain MoPn / Nigg).